The chain runs to 375 residues: Major DNA-binding protein (375 aa).

This sequence belongs to the herpesviridae DNA-binding protein family.

The protein localises to the host nucleus. Single-stranded DNA-binding protein required for DNA replication. This is Major DNA-binding protein from Equine herpesvirus 1 (strain HVS25A) (EHV-1).